Reading from the N-terminus, the 296-residue chain is Light-inducible protein CPRF3 (296 aa).

3 disordered regions span residues 1 to 27, 98 to 165, and 190 to 223; these read MSDGEEGTPMKHPKPASSVEEAPITTT, PNLA…GSLE, and RVNDERELKRQRRKQSNRESARRSRLRKQAKSDE. The span at 107-117 shows a compositional bias: basic and acidic residues; the sequence is VGRKISDEKGR. Residues 145 to 156 are compositionally biased toward low complexity; the sequence is SSSDNDCPSLSS. The bZIP domain maps to 196-259; sequence ELKRQRRKQS…AEVTSENHSI (64 aa). The tract at residues 198–220 is basic motif; it reads KRQRRKQSNRESARRSRLRKQAK. The tract at residues 224-245 is leucine-zipper; the sequence is LQERLDNLSKENRILRKNLQRI.

It belongs to the bZIP family. Binds DNA as a dimer.

The protein resides in the nucleus. Its function is as follows. Binds to the G-box-like motif (5'-ACGTGGC-3') of the chalcone synthase (CHS) gene promoter. G-box and G-box-like motifs are defined in promoters of certain plant genes which are regulated by such diverse stimuli as light-induction or hormone control. This Petroselinum crispum (Parsley) protein is Light-inducible protein CPRF3 (CPRF3).